Here is a 160-residue protein sequence, read N- to C-terminus: Sodium/proline symporter (160 aa).

2 consecutive transmembrane segments (helical) span residues 6-26 and 68-88; these read PMLV…FIAW and IFIS…GAWI.

Belongs to the sodium:solute symporter (SSF) (TC 2.A.21) family.

It localises to the cell inner membrane. It catalyses the reaction L-proline(in) + Na(+)(in) = L-proline(out) + Na(+)(out). Its function is as follows. Catalyzes the sodium-dependent uptake of extracellular L-proline. This is Sodium/proline symporter from Klebsiella oxytoca.